The following is an 89-amino-acid chain: Small ribosomal subunit protein uS15 (89 aa).

It belongs to the universal ribosomal protein uS15 family. In terms of assembly, part of the 30S ribosomal subunit. Forms a bridge to the 50S subunit in the 70S ribosome, contacting the 23S rRNA.

Functionally, one of the primary rRNA binding proteins, it binds directly to 16S rRNA where it helps nucleate assembly of the platform of the 30S subunit by binding and bridging several RNA helices of the 16S rRNA. Its function is as follows. Forms an intersubunit bridge (bridge B4) with the 23S rRNA of the 50S subunit in the ribosome. The chain is Small ribosomal subunit protein uS15 from Pseudomonas fluorescens (strain ATCC BAA-477 / NRRL B-23932 / Pf-5).